The following is a 603-amino-acid chain: Aspartate--tRNA(Asp/Asn) ligase (603 aa).

E172 is an L-aspartate binding site. Positions 196–199 (QLFK) are aspartate. R218 is an L-aspartate binding site. ATP is bound by residues 218–220 (RDE) and Q227. H457 contacts L-aspartate. Residue E491 participates in ATP binding. R498 provides a ligand contact to L-aspartate. 543 to 546 (GLDR) serves as a coordination point for ATP.

The protein belongs to the class-II aminoacyl-tRNA synthetase family. Type 1 subfamily. In terms of assembly, homodimer.

The protein resides in the cytoplasm. The catalysed reaction is tRNA(Asx) + L-aspartate + ATP = L-aspartyl-tRNA(Asx) + AMP + diphosphate. In terms of biological role, aspartyl-tRNA synthetase with relaxed tRNA specificity since it is able to aspartylate not only its cognate tRNA(Asp) but also tRNA(Asn). Reaction proceeds in two steps: L-aspartate is first activated by ATP to form Asp-AMP and then transferred to the acceptor end of tRNA(Asp/Asn). The sequence is that of Aspartate--tRNA(Asp/Asn) ligase from Laribacter hongkongensis (strain HLHK9).